A 458-amino-acid polypeptide reads, in one-letter code: Transcription factor Atf1 (458 aa).

One can recognise a bZIP domain in the interval 347 to 410 (EEKRRNFLER…VNLKTLLLAH (64 aa)). The segment at 349-378 (KRRNFLERNRVAALKCRQRKKQWLANLQNK) is basic motif. The tract at residues 389-403 (LTATVTQLREEIVNL) is leucine-zipper.

The protein belongs to the bZIP family.

It is found in the nucleus. Functionally, transcription factor that positively regulates vegetative growth, reproduction, and osmotic stress response. The sequence is that of Transcription factor Atf1 from Penicillium expansum (Blue mold rot fungus).